The primary structure comprises 281 residues: Acetyl-coenzyme A carboxylase carboxyl transferase subunit beta (281 aa).

The CoA carboxyltransferase N-terminal domain maps to 23 to 281; the sequence is LWSKCEDCGA…KTLAMMRVEG (259 aa). Residues Cys27, Cys30, Cys46, and Cys49 each contribute to the Zn(2+) site. Residues 27–49 form a C4-type zinc finger; the sequence is CEDCGAMLHRRQLEENLNTCNEC.

Belongs to the AccD/PCCB family. In terms of assembly, acetyl-CoA carboxylase is a heterohexamer composed of biotin carboxyl carrier protein (AccB), biotin carboxylase (AccC) and two subunits each of ACCase subunit alpha (AccA) and ACCase subunit beta (AccD). The cofactor is Zn(2+).

It is found in the cytoplasm. The enzyme catalyses N(6)-carboxybiotinyl-L-lysyl-[protein] + acetyl-CoA = N(6)-biotinyl-L-lysyl-[protein] + malonyl-CoA. It functions in the pathway lipid metabolism; malonyl-CoA biosynthesis; malonyl-CoA from acetyl-CoA: step 1/1. Functionally, component of the acetyl coenzyme A carboxylase (ACC) complex. Biotin carboxylase (BC) catalyzes the carboxylation of biotin on its carrier protein (BCCP) and then the CO(2) group is transferred by the transcarboxylase to acetyl-CoA to form malonyl-CoA. In Chlorobium luteolum (strain DSM 273 / BCRC 81028 / 2530) (Pelodictyon luteolum), this protein is Acetyl-coenzyme A carboxylase carboxyl transferase subunit beta.